The primary structure comprises 238 residues: Ribonuclease PH (238 aa).

Phosphate-binding positions include Arg86 and 124-126 (GTR).

This sequence belongs to the RNase PH family. As to quaternary structure, homohexameric ring arranged as a trimer of dimers.

It carries out the reaction tRNA(n+1) + phosphate = tRNA(n) + a ribonucleoside 5'-diphosphate. Functionally, phosphorolytic 3'-5' exoribonuclease that plays an important role in tRNA 3'-end maturation. Removes nucleotide residues following the 3'-CCA terminus of tRNAs; can also add nucleotides to the ends of RNA molecules by using nucleoside diphosphates as substrates, but this may not be physiologically important. Probably plays a role in initiation of 16S rRNA degradation (leading to ribosome degradation) during starvation. This is Ribonuclease PH from Salmonella agona (strain SL483).